The following is a 208-amino-acid chain: Proheparin-binding EGF-like growth factor (208 aa).

An N-terminal signal peptide occupies residues 1–23 (MKLLPSVVLKLFLAAVFSALVTG). Positions 24 to 62 (ESLERLRRGLADGTSNLVSPTESTDQLLPPGGGRGREVL) are excised as a propeptide. At 24 to 161 (ESLERLRRGL…NRLYTYDHTT (138 aa)) the chain is on the extracellular side. A compositionally biased stretch (polar residues) spans 37–49 (TSNLVSPTESTDQ). 2 disordered regions span residues 37-57 (TSNLVSPTESTDQLLPPGGGR) and 81-104 (QALATPSKEERGKRKKKGKGLGKK). The O-linked (GalNAc...) threonine glycan is linked to Thr85. Positions 93-102 (KRKKKGKGLG) are enriched in basic residues. An EGF-like domain is found at 104-144 (KRDPCLRKYKDFCIHGECKYVKELRAPSCICHPGYHGERCH). 3 disulfides stabilise this stretch: Cys108/Cys121, Cys116/Cys132, and Cys134/Cys143. A propeptide spans 149–208 (PVKNRLYTYDHTTILAVVAVVLSSVCLLVIVGLLMFRYHRRGGYDVENEEKVKLGVTASH) (C-terminal). Residues 162-182 (ILAVVAVVLSSVCLLVIVGLL) traverse the membrane as a helical segment. The Cytoplasmic segment spans residues 183–208 (MFRYHRRGGYDVENEEKVKLGVTASH).

Interacts with FBLN1. Interacts with EGFR and ERBB4. In terms of processing, O-glycosylated. As to expression, macrophages, midbrain, cerebellum, hypothalamus, cerebral cortex, bulbourethral gland, lung, heart ventricle, kidney, skin, prostate, seminal vesicle, testis; at low levels in lymph node, thymus, spleen; not detected in pituitary, olfactory bulb, thyroid, duodenum, pancreas, liver, submaxillary gland.

It localises to the secreted. Its subcellular location is the extracellular space. The protein localises to the cell membrane. Functionally, growth factor that mediates its effects via EGFR, ERBB2 and ERBB4. Required for normal cardiac valve formation and normal heart function. Promotes smooth muscle cell proliferation. May be involved in macrophage-mediated cellular proliferation. It is mitogenic for fibroblasts, but not endothelial cells. It is able to bind EGF receptor/EGFR with higher affinity than EGF itself and is a far more potent mitogen for smooth muscle cells than EGF. Also acts as a diphtheria toxin receptor. In Sus scrofa (Pig), this protein is Proheparin-binding EGF-like growth factor (HBEGF).